A 427-amino-acid chain; its full sequence is Histidine--tRNA ligase (427 aa).

This sequence belongs to the class-II aminoacyl-tRNA synthetase family. Homodimer.

The protein resides in the cytoplasm. It catalyses the reaction tRNA(His) + L-histidine + ATP = L-histidyl-tRNA(His) + AMP + diphosphate + H(+). This is Histidine--tRNA ligase from Mannheimia succiniciproducens (strain KCTC 0769BP / MBEL55E).